The following is a 446-amino-acid chain: Tubulin beta-4 chain (446 aa).

GTP contacts are provided by Q11, E69, S138, G142, T143, G144, N204, and N226. A Mg(2+)-binding site is contributed by E69. Residues 417–426 (DLVSEYQQYQ) show a composition bias toward polar residues. Residues 417–446 (DLVSEYQQYQDATADEEGDYEDEDEALHDE) are disordered. A compositionally biased stretch (acidic residues) spans 429-446 (TADEEGDYEDEDEALHDE).

Belongs to the tubulin family. Dimer of alpha and beta chains. A typical microtubule is a hollow water-filled tube with an outer diameter of 25 nm and an inner diameter of 15 nM. Alpha-beta heterodimers associate head-to-tail to form protofilaments running lengthwise along the microtubule wall with the beta-tubulin subunit facing the microtubule plus end conferring a structural polarity. Microtubules usually have 13 protofilaments but different protofilament numbers can be found in some organisms and specialized cells. Mg(2+) is required as a cofactor.

The protein localises to the cytoplasm. It is found in the cytoskeleton. Its function is as follows. Tubulin is the major constituent of microtubules, a cylinder consisting of laterally associated linear protofilaments composed of alpha- and beta-tubulin heterodimers. Microtubules grow by the addition of GTP-tubulin dimers to the microtubule end, where a stabilizing cap forms. Below the cap, tubulin dimers are in GDP-bound state, owing to GTPase activity of alpha-tubulin. This is Tubulin beta-4 chain (TUBB4) from Eleusine indica (Goosegrass).